A 241-amino-acid chain; its full sequence is Attacin-C (241 aa).

An N-terminal signal peptide occupies residues 1–21 (MSKIVLLIVVIVGVLGSLAVA). A propeptide spanning residues 22-23 (LP) is cleaved from the precursor. Pyrrolidone carboxylic acid is present on glutamine 24. Threonine 39 is a glycosylation site (O-linked (GalNAc...) threonine). A Phosphoserine modification is found at serine 127.

It belongs to the attacin/sarcotoxin-2 family. Hemolymph (at protein level).

It is found in the secreted. In terms of biological role, has antimicrobial activity in synergy with other peptides. Strongest activity observed against E.cloacae. The polypeptide is Attacin-C (Drosophila melanogaster (Fruit fly)).